The primary structure comprises 501 residues: Lysine--tRNA ligase (501 aa).

Asp-411 and Glu-418 together coordinate Mg(2+).

This sequence belongs to the class-II aminoacyl-tRNA synthetase family. In terms of assembly, homodimer. Mg(2+) serves as cofactor.

Its subcellular location is the cytoplasm. The enzyme catalyses tRNA(Lys) + L-lysine + ATP = L-lysyl-tRNA(Lys) + AMP + diphosphate. This Mycolicibacterium gilvum (strain PYR-GCK) (Mycobacterium gilvum (strain PYR-GCK)) protein is Lysine--tRNA ligase.